We begin with the raw amino-acid sequence, 357 residues long: Outer membrane protein YedS (357 aa).

Positions 1 to 21 are cleaved as a signal peptide; that stretch reads MKRKVLAMLVPALLVAGAANA.

This sequence belongs to the Gram-negative porin family.

The protein localises to the cell outer membrane. Its function is as follows. Forms pores that allow passive diffusion of small molecules across the outer membrane. Plays a role in resistance to carbapenems; this carbapenem-resistant, noncarbapenemase-producing clinical isolate has a deletion in ompF and a mutated marR gene that does not induce expression of this protein. However if this gene is overexpressed, or if wild-type marR is introduced, this leads to decreased resistance to the carbapenem antibiotics ertapenem, imipenem and meropenem. In Escherichia coli, this protein is Outer membrane protein YedS.